The primary structure comprises 673 residues: Sodium/myo-inositol cotransporter 2 (673 aa).

Residues 1 to 27 (MESTTSSPQPPPSDALEAFPQKSMEPA) are Extracellular-facing. The chain crosses the membrane as a helical span at residues 28–48 (DIVVLVLYFLFVLAVGLWSTV). Residues 49-56 (RTKRDTVK) are Cytoplasmic-facing. The chain crosses the membrane as a helical span at residues 57-77 (GYFLAGGDMVWWPVGASLFAS). Position 78 (Asn-78) is a topological domain, extracellular. The chain crosses the membrane as a helical span at residues 79-99 (VGSGHFIGLAGSGAAVGISVA). Residues 100–102 (AYE) are Cytoplasmic-facing. A helical transmembrane segment spans residues 103 to 123 (LNGLFSVLMLAWIFLPIYIAG). The Extracellular portion of the chain corresponds to 124-180 (QVTTMPEYLKRRFGGSRIPITLASIYPSTHSLTILQVDMYAGAIFIQQSLHLDLYLA). A helical transmembrane segment spans residues 181 to 201 (IVGLLAVTALYTVAGGLAAVI). Over 202–208 (YTDALQT) the chain is Cytoplasmic. The helical transmembrane segment at 209-229 (VIMLIGAFILMGYSFAAVGGM) threads the bilayer. The Extracellular segment spans residues 230–272 (EGLKDQYFLALASNRSENSSCGLPREDAFHIFRDPLTSDLPWP). The chain crosses the membrane as a helical span at residues 273-293 (GILFGMSIPSLWYWCTDQVIV). Residues 294-308 (QRSLAAKNLSHAKGG) lie on the Cytoplasmic side of the membrane. Residues 309 to 329 (SLMAAYLKVLPLFLMVFPGMV) traverse the membrane as a helical segment. The Extracellular portion of the chain corresponds to 330–375 (SRILFPDQVACAHPDICQRVCSNPSGCSDIAYPKLVLELLPTGLRG). A helical membrane pass occupies residues 376-396 (LMMAVMVAALMSSLTSIFNSA). The Cytoplasmic segment spans residues 397 to 418 (STIFTMDLWHHIRPRASERELM). The chain crosses the membrane as a helical span at residues 419 to 439 (IVGRVFVLALVLVSILWIPVV). The Extracellular portion of the chain corresponds to 440 to 446 (QASQGGQ). The chain crosses the membrane as a helical span at residues 447–467 (LFIYIQSISSYLQPPVAVVFI). At 468–479 (MGCFWKRTNEKG) the chain is on the cytoplasmic side. Residues 480–500 (AFSGLILGLLLGLVRLILDFV) traverse the membrane as a helical segment. Residues 501 to 521 (YVQPRCDQPDDRPAVVKDVHY) lie on the Extracellular side of the membrane. Residues 522–542 (LYFSMILSSTTLITVFTVSWF) form a helical membrane-spanning segment. Topologically, residues 543–652 (TETPSKEMVS…SLEENPLVKT (110 aa)) are cytoplasmic. A helical transmembrane segment spans residues 653-673 (LLDVNCIVCISCAIFLWGYFA).

It belongs to the sodium:solute symporter (SSF) (TC 2.A.21) family. As to expression, expressed in kidney and small intestine.

It is found in the membrane. The protein resides in the apical cell membrane. The catalysed reaction is myo-inositol(out) + 2 Na(+)(out) = myo-inositol(in) + 2 Na(+)(in). It carries out the reaction 1D-chiro-inositol(out) + 2 Na(+)(out) = 1D-chiro-inositol(in) + 2 Na(+)(in). It catalyses the reaction D-glucose(out) + 2 Na(+)(out) = D-glucose(in) + 2 Na(+)(in). The enzyme catalyses D-xylose(out) + 2 Na(+)(out) = D-xylose(in) + 2 Na(+)(in). Its activity is regulated as follows. MI transport activity inhibited by D-chiro-inositol (DCI), phlorizin (Pz) and sodium (Na(+)). Insulin increases D-chiro-inositol uptake. Involved in the sodium-dependent cotransport of myo-inositol (MI) with a Na(+):MI stoichiometry of 2:1. Exclusively responsible for apical MI transport and absorption in intestine. Can also transport D-chiro-inositol (DCI) but not L-fucose. Exhibits stereospecific cotransport of both D-glucose and D-xylose. May induce apoptosis through the TNF-alpha, PDCD1 pathway. May play a role in the regulation of MI concentration in serum, involving reabsorption in at least the proximal tubule of the kidney. This Rattus norvegicus (Rat) protein is Sodium/myo-inositol cotransporter 2.